The sequence spans 171 residues: Tetratricopeptide repeat protein 9C (171 aa).

3 TPR repeats span residues 8 to 41 (AQLY…LRGL), 72 to 107 (TDCY…QPDN), and 108 to 141 (AKAL…QPKD).

The protein belongs to the TTC9 family.

This Homo sapiens (Human) protein is Tetratricopeptide repeat protein 9C (TTC9C).